We begin with the raw amino-acid sequence, 262 residues long: 5'-nucleotidase SurE (262 aa).

A divalent metal cation contacts are provided by D13, D14, S44, and N97.

Belongs to the SurE nucleotidase family. Requires a divalent metal cation as cofactor.

It is found in the cytoplasm. The catalysed reaction is a ribonucleoside 5'-phosphate + H2O = a ribonucleoside + phosphate. Its function is as follows. Nucleotidase that shows phosphatase activity on nucleoside 5'-monophosphates. This Myxococcus xanthus (strain DK1622) protein is 5'-nucleotidase SurE.